Consider the following 202-residue polypeptide: Large ribosomal subunit protein bL17 (202 aa).

Residues 130–142 (AAPAATAPAPVEE) are compositionally biased toward low complexity. The disordered stretch occupies residues 130-202 (AAPAATAPAP…TEESTEDDKA (73 aa)). 2 stretches are compositionally biased toward acidic residues: residues 143-168 (APAE…EASP) and 177-202 (QPVE…DDKA).

It belongs to the bacterial ribosomal protein bL17 family. In terms of assembly, part of the 50S ribosomal subunit. Contacts protein L32.

In Nocardioides sp. (strain ATCC BAA-499 / JS614), this protein is Large ribosomal subunit protein bL17.